The following is a 615-amino-acid chain: Sodium-coupled neutral amino acid transporter 9 homolog (615 aa).

Over 1 to 165 (MPPFFAEFTE…LKDVSGKQGS (165 aa)) the chain is Cytoplasmic. The tract at residues 41–65 (VDDNDTDPLLDDEPPRRLPPAGGVP) is disordered. Residues 42-52 (DDNDTDPLLDD) are compositionally biased toward acidic residues. Residues 166–186 (IVTIFSIWNTMMGTSLLAMPW) form a helical membrane-spanning segment. The interval 175–180 (TMMGTS) is important for arginine binding and amino acid transport. At 187 to 192 (ALQQAG) the chain is on the lumenal side. The helical transmembrane segment at 193–213 (LVLGIIIMLSMAAICFYTAYI) threads the bilayer. The Cytoplasmic portion of the chain corresponds to 214 to 246 (VIESPKRLQDLSVDPLLAEFSDVCKSLFGRIGE). A helical transmembrane segment spans residues 247-273 (YCAVVFSVCVLIGGVIVYWVLMSNFLY). Residues 274 to 341 (YTGAVVYESM…TGDDSWSFDK (68 aa)) lie on the Lumenal side of the membrane. 2 N-linked (GlcNAc...) asparagine glycosylation sites follow: Asn-286 and Asn-295. A disulfide bridge connects residues Cys-304 and Cys-478. A helical membrane pass occupies residues 342-358 (FWTLRGTVPIYLAFALF). At 359-367 (PLMNFKSPT) the chain is on the cytoplasmic side. The chain crosses the membrane as a helical span at residues 368-392 (FFTKFNVLGTISVMYLLMFVFSKLL). The Lumenal portion of the chain corresponds to 393 to 413 (ECGVNMDFSNPKSIHYVQLAN). A helical transmembrane segment spans residues 414–434 (MHFPALSGTLTLSYFIHNAVL). Topologically, residues 435–451 (TILRNQKHPENNARDLS) are cytoplasmic. A helical transmembrane segment spans residues 452–472 (IGYCLVAFCYVFIGFTFFAAF). Over 473–491 (PVQRSCISDNFLNNFGAGD) the chain is Lumenal. A helical transmembrane segment spans residues 492 to 512 (VLSSTARLFLLFQMITVLPLL). The Cytoplasmic portion of the chain corresponds to 513–533 (MFLVRSQLFYAIFGQTWPGAI). A helical transmembrane segment spans residues 534 to 554 (RVIILNVLLIAVAVGFATFYP). The Lumenal segment spans residues 555-561 (NVGSILR). The chain crosses the membrane as a helical span at residues 562 to 582 (YVGSISGLVYVFALPAMVYIK). The Cytoplasmic segment spans residues 583-594 (QSEAAGTLTPMK). A helical membrane pass occupies residues 595–615 (KYAHYGIIVIGVANLIAQFVI).

It belongs to the amino acid/polyamine transporter 2 family. SLC38A9 subfamily.

It is found in the lysosome membrane. The protein resides in the late endosome membrane. Amino acid transport is sodium-dependent. Transport of leucine, tyrosine and phenylalanine is increased by arginine binding. Its function is as follows. Lysosomal amino acid transporter involved in the activation of mTORC1 in response to amino acid levels. Probably acts as an amino acid sensor of the Rag GTPases and Ragulator complexes, 2 complexes involved in amino acid sensing and activation of mTORC1, a signaling complex promoting cell growth in response to growth factors, energy levels, and amino acids. The chain is Sodium-coupled neutral amino acid transporter 9 homolog from Caenorhabditis elegans.